The chain runs to 480 residues: Glycerol 3-phosphate dehydrogenase (480 aa).

FAD contacts are provided by residues Ile-12, Glu-31, 40–41 (TT), and 45–47 (SAI). Sn-glycerol 3-phosphate contacts are provided by Ser-45 and His-49. Residue His-49 is the Proton acceptor of the active site. Val-172 provides a ligand contact to FAD. Positions 249 and 310 each coordinate sn-glycerol 3-phosphate. 335-336 (IE) lines the FAD pocket. A sn-glycerol 3-phosphate-binding site is contributed by Ser-337. An FAD-binding site is contributed by Ser-341. Positions 400, 402, 437, and 442 each coordinate [2Fe-2S] cluster.

Requires [2Fe-2S] cluster as cofactor.

It carries out the reaction sn-glycerol 3-phosphate + A = dihydroxyacetone phosphate + AH2. The protein operates within polyol metabolism; glycerol degradation via glycerol kinase pathway; glycerone phosphate from sn-glycerol 3-phosphate (aerobic route): step 1/1. In terms of biological role, catalyzes the dehydrogenation of glycerol 3-phosphate to dihydroxyacetone phosphate. Is probably involved in anaerobic glycerol metabolism. Active in vitro with the artificial electron acceptor 2,6-dichlorophenolindophenol (DCPIP), but not with NAD or NADP. Also displays a very low oxidase activity in vitro on glycerol 3-phosphate with O2 as the electron acceptor, but this activity is most likely not physiological. The polypeptide is Glycerol 3-phosphate dehydrogenase (Caloramator mitchellensis).